The primary structure comprises 390 residues: Leu/Ile/Val-binding protein homolog 6 (390 aa).

A signal peptide spans 1-21; it reads MKKIALTALAVFSLAASAAYA.

This sequence belongs to the leucine-binding protein family.

In terms of biological role, component of an amino-acid transport system. The protein is Leu/Ile/Val-binding protein homolog 6 of Brucella melitensis biotype 1 (strain ATCC 23456 / CCUG 17765 / NCTC 10094 / 16M).